Consider the following 252-residue polypeptide: Endonuclease NucS (252 aa).

The protein belongs to the NucS endonuclease family.

Its subcellular location is the cytoplasm. In terms of biological role, cleaves both 3' and 5' ssDNA extremities of branched DNA structures. This is Endonuclease NucS from Sulfurisphaera tokodaii (strain DSM 16993 / JCM 10545 / NBRC 100140 / 7) (Sulfolobus tokodaii).